The chain runs to 199 residues: Recombination protein RecR (199 aa).

The C4-type zinc finger occupies 58–73 (CSICNNITDVDPCTYC). Residues 81–176 (QVICVVEEPT…RVTRIATGVP (96 aa)) enclose the Toprim domain.

The protein belongs to the RecR family.

In terms of biological role, may play a role in DNA repair. It seems to be involved in an RecBC-independent recombinational process of DNA repair. It may act with RecF and RecO. The sequence is that of Recombination protein RecR from Koribacter versatilis (strain Ellin345).